Consider the following 536-residue polypeptide: Suppressor of cytokine signaling 5 (536 aa).

A required for interaction with IL4R region spans residues 1 to 50 (MDKVGKMWNNFKYRCQNLFGHEGGSRSENVDMNSNRCLSVKEKNISIGDS). The disordered stretch occupies residues 115-175 (SRHAPWGGKK…SVSSRTVGSR (61 aa)). Low complexity predominate over residues 158-169 (VSSVHDMDSVSS). Residues 381–476 (CYWGVMDRYE…FFEPLLTISL (96 aa)) enclose the SH2 domain. In terms of domain architecture, SOCS box spans 471–520 (LLTISLNRTFPFSLQYICRAVICRCTTYDGIDGLPLPSMLQDFLKEYHYK).

As to quaternary structure, interacts with IL4R; inhibits IL4 signaling. Interacts with EGFR. Interacts with ELOB and ELOC; mediates EGFR ubiquitination and degradation. Phosphorylated. Phosphorylation is induced by EGF.

Its pathway is protein modification; protein ubiquitination. SOCS family proteins form part of a classical negative feedback system that regulates cytokine signal transduction. May be a substrate-recognition component of a SCF-like ECS (Elongin BC-CUL2/5-SOCS-box protein) E3 ubiquitin-protein ligase complex which mediates the ubiquitination and subsequent proteasomal degradation of target proteins. Inhibits for instance EGF signaling by mediating the degradation of the EGF receptor/EGFR. Involved in the regulation of T-helper cell differentiation by inhibiting of the IL4 signaling pathway which promotes differentiation into the Th2 phenotype. Can also partially inhibit IL6 and LIF signaling. The polypeptide is Suppressor of cytokine signaling 5 (SOCS5) (Homo sapiens (Human)).